Here is a 116-residue protein sequence, read N- to C-terminus: Putative pterin-4-alpha-carbinolamine dehydratase 1 (116 aa).

It belongs to the pterin-4-alpha-carbinolamine dehydratase family.

The enzyme catalyses (4aS,6R)-4a-hydroxy-L-erythro-5,6,7,8-tetrahydrobiopterin = (6R)-L-erythro-6,7-dihydrobiopterin + H2O. This is Putative pterin-4-alpha-carbinolamine dehydratase 1 from Cupriavidus pinatubonensis (strain JMP 134 / LMG 1197) (Cupriavidus necator (strain JMP 134)).